The following is a 202-amino-acid chain: Response regulator RamR (202 aa).

The response regulatory stretch occupies residues 1 to 121 (MGEMVRIAVV…LITAVHTVAR (121 aa)). One can recognise an HTH luxR-type domain in the interval 135-200 (LKGAEMPLTT…DAIRIVQSAG (66 aa)). The segment at residues 159 to 178 (IAEIAARLHLSRGTVRNYMA) is a DNA-binding region (H-T-H motif).

In terms of assembly, homodimer, in the absence of phosphorylation. May be phosphorylated by an unknown kinase, probably on Asp-56.

In terms of biological role, a transcription factor required for aerial hyphae formation on rich medium. Activates transcription of ramC. Might be part of a two-component regulatory system. Binds the promoter of ramC. Non-phosphorylated protein cooperatively binds multiple sites in the ramC promoter. Has not been seen to autophosphorylate using the small molecule phosphodonors phosphoramidate, acetyl phosphate or carbamoyl phosphate. Upon low expression suppresses the bald (bld, no aerial hyphae) phenotype of citA but not bldJ mutants; higher expression also suppresses the bldJ mutant as well as several other bld mutations, inducing SapB production even on media where SapB is normally not produced. Expression of the ram locus (ramA, ramB and ramR) induces rapid aerial mycelium formation in S.lividans. Overexpression suppresses the no aerial hyphae phenotype of a chaplin-negative strain, probably by inducing expression of SapB. Overexpression of RamR show there are about 280 genes having at least a threefold increase or fourfold decrease in RNA abundance versus wild-type including gene cluster SCO4072-SCO4075. The protein is Response regulator RamR of Streptomyces coelicolor (strain ATCC BAA-471 / A3(2) / M145).